The chain runs to 160 residues: Cytochrome b6-f complex subunit 4 (160 aa).

3 consecutive transmembrane segments (helical) span residues 36–56 (LLYV…ALAV), 95–115 (LLGV…PFIE), and 131–151 (TVFL…ALPL).

Belongs to the cytochrome b family. PetD subfamily. In terms of assembly, the 4 large subunits of the cytochrome b6-f complex are cytochrome b6, subunit IV (17 kDa polypeptide, PetD), cytochrome f and the Rieske protein, while the 4 small subunits are PetG, PetL, PetM and PetN. The complex functions as a dimer.

Its subcellular location is the cellular thylakoid membrane. Its function is as follows. Component of the cytochrome b6-f complex, which mediates electron transfer between photosystem II (PSII) and photosystem I (PSI), cyclic electron flow around PSI, and state transitions. The polypeptide is Cytochrome b6-f complex subunit 4 (Desmonostoc sp. (strain PCC 7906) (Nostoc sp. (strain PCC 7906))).